The primary structure comprises 337 residues: DNA-directed RNA polymerase subunit alpha (337 aa).

The tract at residues Met-1–Glu-233 is alpha N-terminal domain (alpha-NTD). The interval Phe-249 to Tyr-337 is alpha C-terminal domain (alpha-CTD).

The protein belongs to the RNA polymerase alpha chain family. As to quaternary structure, homodimer. The RNAP catalytic core consists of 2 alpha, 1 beta, 1 beta' and 1 omega subunit. When a sigma factor is associated with the core the holoenzyme is formed, which can initiate transcription.

The catalysed reaction is RNA(n) + a ribonucleoside 5'-triphosphate = RNA(n+1) + diphosphate. In terms of biological role, DNA-dependent RNA polymerase catalyzes the transcription of DNA into RNA using the four ribonucleoside triphosphates as substrates. The chain is DNA-directed RNA polymerase subunit alpha from Brucella anthropi (strain ATCC 49188 / DSM 6882 / CCUG 24695 / JCM 21032 / LMG 3331 / NBRC 15819 / NCTC 12168 / Alc 37) (Ochrobactrum anthropi).